The primary structure comprises 222 residues: Flagellar L-ring protein (222 aa).

The first 18 residues, 1–18 (MRRPGAAALAAAALALAG), serve as a signal peptide directing secretion. C19 carries N-palmitoyl cysteine lipidation. Residue C19 is the site of S-diacylglycerol cysteine attachment.

Belongs to the FlgH family. The basal body constitutes a major portion of the flagellar organelle and consists of four rings (L,P,S, and M) mounted on a central rod.

The protein localises to the cell outer membrane. Its subcellular location is the bacterial flagellum basal body. Its function is as follows. Assembles around the rod to form the L-ring and probably protects the motor/basal body from shearing forces during rotation. This is Flagellar L-ring protein from Burkholderia mallei (strain ATCC 23344).